A 320-amino-acid polypeptide reads, in one-letter code: Iminosuccinate reductase (320 aa).

The active-site Proton donor/acceptor is the Lys67. Residues Arg110, 137–138 (HQ), Asn159, Ser199, 219–222 (MGTD), Lys226, and Gly291 contribute to the NAD(+) site.

It belongs to the ornithine cyclodeaminase/mu-crystallin family. BhcD subfamily.

It catalyses the reaction L-aspartate + NAD(+) = iminosuccinate + NADH + H(+). Its function is as follows. Imine reductase that catalyzes the NADH-dependent reduction of iminosuccinate to L-aspartate. Is essential for the growth of P.denitrificans in the presence of glycolate and glyoxylate since it functions in glyoxylate assimilation via the beta-hydroxyaspartate cycle (BHAC). Thereby BhcD regenerates the amino group donor for the first step of the BHAC. This is Iminosuccinate reductase from Paracoccus denitrificans (strain Pd 1222).